The following is a 279-amino-acid chain: Tryptophan 2,3-dioxygenase (279 aa).

Substrate contacts are provided by residues 48-52 (FIIQH), Tyr110, and Arg114. Heme is bound at residue His237. Residue Thr251 participates in substrate binding.

It belongs to the tryptophan 2,3-dioxygenase family. Homotetramer. Heme is required as a cofactor.

The enzyme catalyses L-tryptophan + O2 = N-formyl-L-kynurenine. Its pathway is amino-acid degradation; L-tryptophan degradation via kynurenine pathway; L-kynurenine from L-tryptophan: step 1/2. In terms of biological role, heme-dependent dioxygenase that catalyzes the oxidative cleavage of the L-tryptophan (L-Trp) pyrrole ring and converts L-tryptophan to N-formyl-L-kynurenine. Catalyzes the oxidative cleavage of the indole moiety. The protein is Tryptophan 2,3-dioxygenase of Bradyrhizobium sp. (strain BTAi1 / ATCC BAA-1182).